Reading from the N-terminus, the 95-residue chain is MSVTKKDVAYIAELAKLRFTEAEQEKMTTELNAILHYVDKLNEVDTDGVEPLSSIHDQVNVLREDCLKPSLDNEEALKNAPDRQERFFRVPKVIG.

This sequence belongs to the GatC family. In terms of assembly, heterotrimer of A, B and C subunits.

The catalysed reaction is L-glutamyl-tRNA(Gln) + L-glutamine + ATP + H2O = L-glutaminyl-tRNA(Gln) + L-glutamate + ADP + phosphate + H(+). It carries out the reaction L-aspartyl-tRNA(Asn) + L-glutamine + ATP + H2O = L-asparaginyl-tRNA(Asn) + L-glutamate + ADP + phosphate + 2 H(+). In terms of biological role, allows the formation of correctly charged Asn-tRNA(Asn) or Gln-tRNA(Gln) through the transamidation of misacylated Asp-tRNA(Asn) or Glu-tRNA(Gln) in organisms which lack either or both of asparaginyl-tRNA or glutaminyl-tRNA synthetases. The reaction takes place in the presence of glutamine and ATP through an activated phospho-Asp-tRNA(Asn) or phospho-Glu-tRNA(Gln). The protein is Aspartyl/glutamyl-tRNA(Asn/Gln) amidotransferase subunit C of Prosthecochloris aestuarii (strain DSM 271 / SK 413).